Reading from the N-terminus, the 506-residue chain is Ribose import ATP-binding protein RbsA 2 (506 aa).

ABC transporter domains follow at residues 7 to 242 and 250 to 497; these read LEMR…VGRP and ERDI…TGVN. An ATP-binding site is contributed by 39-46; sequence GENGAGKS.

It belongs to the ABC transporter superfamily. Ribose importer (TC 3.A.1.2.1) family. The complex is composed of an ATP-binding protein (RbsA), two transmembrane proteins (RbsC) and a solute-binding protein (RbsB).

The protein resides in the cell inner membrane. It carries out the reaction D-ribose(out) + ATP + H2O = D-ribose(in) + ADP + phosphate + H(+). Functionally, part of the ABC transporter complex RbsABC involved in ribose import. Responsible for energy coupling to the transport system. This chain is Ribose import ATP-binding protein RbsA 2, found in Escherichia coli O157:H7.